A 236-amino-acid polypeptide reads, in one-letter code: GLIPR1-like protein 1 (236 aa).

The signal sequence occupies residues 1 to 27 (MALKKKLNFLWTLVLYLIASRLPKAFG). The 133-residue stretch at 46 to 178 (LNIHNELRRK…FSAGLFVCNY (133 aa)) folds into the SCP domain. Residue Asn126 is glycosylated (N-linked (GlcNAc...) asparagine).

It belongs to the CRISP family. As to quaternary structure, part of a oolemmal binding multimeric complex (IZUMO1 complex) composed at least of IZUMO1 and GLIPR1L1; the complex assemblage is influenced by the maturation status of the male germ cell. Interacts with IZUMO1. In terms of processing, N-glycosylated. N-glycosylation decreases during the transit in the caput. Expressed in testis (at protein level). Little or no expression in other tissues tested.

The protein localises to the cytoplasmic vesicle. The protein resides in the secretory vesicle. It is found in the acrosome. It localises to the cell membrane. Its subcellular location is the membrane raft. The protein localises to the secreted. Its function is as follows. Required for optimal fertilization at the stage of sperm-oocyte fusion, plays a role in optimizing acrosome function, the translocation of IZUMO1 during the acrosome reaction and the fertilization process. Component of epididymosomes, one type of membranous microvesicules which mediate the transfer of lipids and proteins to spermatozoa plasma membrane during epididymal maturation. Also component of the CD9-positive microvesicules found in the cauda region. The polypeptide is GLIPR1-like protein 1 (Mus musculus (Mouse)).